The chain runs to 469 residues: Transcriptional coactivator YAP1 (469 aa).

Residues 1 to 21 (MEPAQQPPPQPAPQGPAPPSV) show a composition bias toward pro residues. The tract at residues 1–47 (MEPAQQPPPQPAPQGPAPPSVSPAGTPAAPPAPPAGHQVVHVRGDSE) is disordered. Ser-46 is modified (phosphoserine). Thr-48 is subject to Phosphothreonine. Residues 71–85 (MRLRKLPDSFFKPPE) are a coiled coil. Position 75 is an N6-lactoyllysine (Lys-75). Residues 76-99 (LPDSFFKPPEPKSHSRQASTDAGT) are disordered. A phosphoserine mark is found at Ser-90 and Ser-94. Phosphothreonine occurs at positions 95 and 104. Ser-112 is modified (phosphoserine; by LATS1 and LATS2). A phosphoserine mark is found at Ser-113 and Ser-116. Thr-136 is modified (phosphothreonine; by MAPK8 and MAPK9). Ser-146 is subject to Phosphoserine; by LATS1 and LATS2. 2 consecutive WW domains span residues 153–186 (VPLP…DPRK) and 212–245 (GPLP…DPRL). Residues 258 to 290 (SAPVKQPPPLAPQSPQGGVLGGGSSNQQQQIQL) form a disordered region. Phosphoserine is present on residues Ser-271 and Ser-320. A transactivation domain region spans residues 273 to 469 (QGGVLGGGSS…LDKESFLTWL (197 aa)). A coiled-coil region spans residues 280 to 325 (GSSNQQQQIQLQQLQMEKERLRLKQQELFRQELALRSQLPSLEQDG). Residue Ser-333 is modified to Phosphoserine; by MAPK8 and MAPK9. Positions 345–357 (TNSSDPFLNSGTY) are enriched in polar residues. The interval 345-405 (TNSSDPFLNS…SQSTLPSQQS (61 aa)) is disordered. 3 positions are modified to phosphoserine: Ser-347, Ser-348, and Ser-354. Residue Ser-363 is modified to Phosphoserine; by LATS1 and LATS2. The segment covering 365–375 (DSGLSMSSYSI) has biased composition (polar residues). 2 positions are modified to phosphoserine; by CK1: Ser-366 and Ser-369. A Phosphotyrosine; by ABL1 modification is found at Tyr-373. Thr-378 bears the Phosphothreonine; by MAPK8 and MAPK9 mark. Residues 393 to 405 (DTISQSTLPSQQS) are compositionally biased toward polar residues.

This sequence belongs to the YAP1 family. As to quaternary structure, part of a complex when phosphorylated that contains DSG3, PKP1, YAP1 and YWHAG; the complex is required for localization of DSG3 and YAP1 to the cell membrane in keratinocytes. Binds to the SH3 domain of the YES kinase. Binds to WBP1 and WBP2. Binds, in vitro, through the WW1 domain, to neural isoforms of ENAH that contain the PPSY motif. The phosphorylated form interacts with YWHAB. Interacts (via WW domains) with LATS1 (via PPxY motif 2). Interacts with LATS2. Interacts (via WW domain 1) with ERBB4 (via PPxY motif 2). Interacts with TEAD1, TEAD2, TEAD3 and TEAD4. Interacts with TP73. Interacts with RUNX1. Interacts with HCK. Interacts (via WW domains) with PTPN14 (via PPxY motif 2); this interaction leads to the cytoplasmic sequestration of YAP1 and inhibits its transcriptional coactivator activity. Interacts (when phosphorylated at Ser-112) with SMAD2, SMAD3 and WWTR1. Interacts with PRRG2 (via cytoplasmic domain). Interacts (via WW domains) with PRRG4 (via cytoplasmic domain). Interacts (phosphorylated) with CLDN18; the interaction sequesters YAP1 away from the nucleus and thereby restricts transcription of YAP1 target genes. Interacts with SMAD1. Interacts with AMOT; the interaction facilitates translocation of YAP1 to the cytoplasm and tight junctions. Interacts with AMOTL2, the interaction is required for ubiquitination of AMOTL2 and localization of YAP1 to tight junctions. In terms of processing, phosphorylated by LATS1 and LATS2; leading to cytoplasmic translocation and inactivation. Phosphorylated by ABL1; leading to YAP1 stabilization, enhanced interaction with TP73 and recruitment onto proapoptotic genes; in response to DNA damage. Phosphorylation at Ser-366 and Ser-369 by CK1 is triggered by previous phosphorylation at Ser-363 by LATS proteins and leads to YAP1 ubiquitination by SCF(beta-TRCP) E3 ubiquitin ligase and subsequent degradation. Phosphorylated at Thr-104, Thr-136, Ser-333 and Thr-378 by MAPK8/JNK1 and MAPK9/JNK2, which is required for the regulation of apoptosis by YAP1. Lactylation by AARS1 promotes nuclear localization and stabilization of YAP1, leading to increased Hippo signaling pathway. Delactylated by SIRT1. Post-translationally, ubiquitinated by SCF(beta-TRCP) E3 ubiquitin ligase. Highly specific to cortical neurons.

The protein resides in the cytoplasm. The protein localises to the nucleus. Its subcellular location is the cell junction. It localises to the tight junction. It is found in the cell membrane. Its function is as follows. Transcriptional regulator with dual roles as a coactivator and corepressor. Critical downstream regulatory target in the Hippo signaling pathway, crucial for organ size control and tumor suppression by restricting proliferation and promoting apoptosis. The Hippo signaling pathway core involves a kinase cascade featuring STK3/MST2 and STK4/MST1, along with its regulatory partner SAV1, which phosphorylates and activates LATS1/2 in complex with their regulatory protein, MOB1. This activation leads to the phosphorylation and inactivation of the YAP1 oncoprotein and WWTR1/TAZ. Phosphorylation of YAP1 by LATS1/2 prevents its nuclear translocation, thereby regulating the expression of its target genes. The transcriptional regulation of gene expression requires TEAD transcription factors and modulates cell growth, anchorage-independent growth, and induction of epithelial-mesenchymal transition (EMT). Plays a key role in tissue tension and 3D tissue shape by regulating the cortical actomyosin network, acting via ARHGAP18, a Rho GTPase activating protein that suppresses F-actin polymerization. It also suppresses ciliogenesis by acting as a transcriptional corepressor of TEAD4 target genes AURKA and PLK1. In conjunction with WWTR1, regulates TGFB1-dependent SMAD2 and SMAD3 nuclear accumulation. Synergizes with WBP2 to enhance PGR activity. In terms of biological role, attenuates p73-mediated cell death signaling in transcriptional repression-induced atypical death (TRIAD) of neurons. In Rattus norvegicus (Rat), this protein is Transcriptional coactivator YAP1 (Yap1).